We begin with the raw amino-acid sequence, 59 residues long: MAKLRITLVKSLIGRKKDHIATANALGLTKIRKTVEPEATPQVQGMIKKIEYLLKVEEV.

Belongs to the universal ribosomal protein uL30 family. In terms of assembly, part of the 50S ribosomal subunit.

In Clostridium beijerinckii (strain ATCC 51743 / NCIMB 8052) (Clostridium acetobutylicum), this protein is Large ribosomal subunit protein uL30.